Here is a 324-residue protein sequence, read N- to C-terminus: Arginase (324 aa).

Positions 115, 142, 144, and 146 each coordinate Mn(2+). Substrate is bound by residues 144–148 (HTDLH), 155–157 (SGN), and aspartate 196. Residues aspartate 244 and aspartate 246 each contribute to the Mn(2+) site. 2 residues coordinate substrate: threonine 258 and glutamate 289.

This sequence belongs to the arginase family. As to quaternary structure, homohexamer. It depends on Mn(2+) as a cofactor.

It catalyses the reaction L-arginine + H2O = urea + L-ornithine. Its pathway is nitrogen metabolism; urea cycle; L-ornithine and urea from L-arginine: step 1/1. This is Arginase (arcA) from Agrobacterium fabrum (strain C58 / ATCC 33970) (Agrobacterium tumefaciens (strain C58)).